The sequence spans 206 residues: Small ribosomal subunit protein uS4 (206 aa).

The region spanning 93 to 156 (CRLDNLVYRL…RKIKIIAEAL (64 aa)) is the S4 RNA-binding domain.

It belongs to the universal ribosomal protein uS4 family. In terms of assembly, part of the 30S ribosomal subunit. Contacts protein S5. The interaction surface between S4 and S5 is involved in control of translational fidelity.

Functionally, one of the primary rRNA binding proteins, it binds directly to 16S rRNA where it nucleates assembly of the body of the 30S subunit. With S5 and S12 plays an important role in translational accuracy. The chain is Small ribosomal subunit protein uS4 from Protochlamydia amoebophila (strain UWE25).